We begin with the raw amino-acid sequence, 1030 residues long: Eukaryotic translation initiation factor 3 subunit A (1030 aa).

A coiled-coil region spans residues Phe94 to Glu126. The 176-residue stretch at Ser308–Phe483 folds into the PCI domain. Coiled-coil stretches lie at residues Ile527–Ile620 and Ile720–Ala772. Composition is skewed to basic and acidic residues over residues Arg576–Glu591, Glu743–Asn771, Arg800–Gly931, Gly939–Gly985, and Asp1003–Asp1019. Disordered regions lie at residues Arg576–Asp603 and Arg737–Tyr1030.

This sequence belongs to the eIF-3 subunit A family. In terms of assembly, component of the eukaryotic translation initiation factor 3 (eIF-3) complex.

The protein localises to the cytoplasm. Functionally, RNA-binding component of the eukaryotic translation initiation factor 3 (eIF-3) complex, which is involved in protein synthesis of a specialized repertoire of mRNAs and, together with other initiation factors, stimulates binding of mRNA and methionyl-tRNAi to the 40S ribosome. The eIF-3 complex specifically targets and initiates translation of a subset of mRNAs involved in cell proliferation. The chain is Eukaryotic translation initiation factor 3 subunit A (eif3A) from Dictyostelium discoideum (Social amoeba).